The primary structure comprises 222 residues: CEACAM1-like protein UL7 (222 aa).

N-linked (GlcNAc...) asparagine; by host glycans are attached at residues Asn50, Asn56, Asn60, Asn71, Asn105, Asn109, Asn125, Asn132, Asn147, Asn164, Asn168, and Asn189. Residues 193–213 (LALVGVIVFIALIVVCIMGWW) form a helical membrane-spanning segment.

Belongs to the RL11 family. Interacts with host FLT3. In terms of processing, highly glycosylated.

The protein localises to the secreted. The protein resides in the host cell membrane. In terms of biological role, plays a role in modulating the host immune response and affecting host cytokine production. Structurally and functionally homolog of host CEACAM1, induces endothelial cell angiogenesis. Ligands for host FLT3 receptor, activates the PI3K/AKT and MAPK/ERK pathways. In turn, triggers hematopoietic progenitor cell and monocyte differentiation leading to virus reactivation. The sequence is that of CEACAM1-like protein UL7 (UL7) from Human cytomegalovirus (strain AD169) (HHV-5).